Here is a 771-residue protein sequence, read N- to C-terminus: GPI mannosyltransferase 3 (771 aa).

Residues 1–47 are disordered; that stretch reads MSSSRRRKSFTSSSSSSSPSFHSPPPTSRLRPRSPPSSNTKTSPTST. Low complexity-rich tracts occupy residues 10–21 and 36–47; these read FTSSSSSSSPSF and PSSNTKTSPTST. A run of 7 helical transmembrane segments spans residues 49–69, 251–271, 285–305, 341–361, 378–398, 410–430, and 441–461; these read PLATNILLSLIAFRLVNAFTV, LSLAAVACILRPTNILIWMGL, AILVREVLLCGCAVLGLSCVV, YVSQGFPLLLTTALPFALVGL, SLVQAQLALICVIMPFVLSLV, LPSLHILSAPPLVDYFLPAVI, and LTLIFLLLVNIVIALYTTIYH. The segment at 575-594 is disordered; sequence SYLSAQPRPQHPSTTSTNDA.

Belongs to the glycosyltransferase 22 family. PIGB subfamily.

It localises to the endoplasmic reticulum membrane. It participates in glycolipid biosynthesis; glycosylphosphatidylinositol-anchor biosynthesis. Mannosyltransferase involved in glycosylphosphatidylinositol-anchor biosynthesis. Transfers the third mannose to Man2-GlcN-acyl-PI during GPI precursor assembly. This chain is GPI mannosyltransferase 3 (gpi10), found in Aspergillus fumigatus (strain ATCC MYA-4609 / CBS 101355 / FGSC A1100 / Af293) (Neosartorya fumigata).